The primary structure comprises 185 residues: Homeobox-leucine zipper protein ATHB-22 (185 aa).

A DNA-binding region (homeobox) is located at residues 76 to 135 (TSEQLKFLERSFQEEIKLNPDRKMKLNPDRKMKLSKELGLQPRQIAVWFQNRKARWKNKQ). Residues 136–164 (LEHLYESLRQEFDIVSREKELLQEELIQL) are leucine-zipper.

It belongs to the HD-ZIP homeobox family. Class I subfamily. In terms of tissue distribution, expressed in siliques.

Its subcellular location is the nucleus. Its function is as follows. Probable transcription factor. The protein is Homeobox-leucine zipper protein ATHB-22 (ATHB-22) of Arabidopsis thaliana (Mouse-ear cress).